Consider the following 179-residue polypeptide: Ribosome-recycling factor (179 aa).

The protein belongs to the RRF family.

It localises to the cytoplasm. Responsible for the release of ribosomes from messenger RNA at the termination of protein biosynthesis. May increase the efficiency of translation by recycling ribosomes from one round of translation to another. This is Ribosome-recycling factor from Chlamydia trachomatis serovar L2b (strain UCH-1/proctitis).